Consider the following 509-residue polypeptide: Putative ATP-dependent RNA helicase QP509L (509 aa).

One can recognise a Helicase ATP-binding domain in the interval 110–262; that stretch reads KKLLSPYGRF…KIILHHLGQP (153 aa). Residue 123 to 130 participates in ATP binding; the sequence is LNTGLGKT. Positions 215 to 218 match the DEAH box motif; it reads DEAH.

It belongs to the DEAD box helicase family. DEAH subfamily.

The enzyme catalyses ATP + H2O = ADP + phosphate + H(+). The polypeptide is Putative ATP-dependent RNA helicase QP509L (Ornithodoros (relapsing fever ticks)).